A 443-amino-acid polypeptide reads, in one-letter code: MNVKHGTFKGGIHPPYRKESTAEVPLGFGKKPEMVIIPMSLHIGAPCTPIVKKGDTVFLGQRVGEPNGFVSVPVHASVSGKVIAVEERPHASGDRVMSVVIESDGLDTIDPSIKPYGTLEDMDADAIKKMVLNAGIVGLGGATFPTHVKLAIPPDKKVDCVVLNGAECEPYLTADHHLMTSQAEKVVMGLKLAMKSVGVEKGFIGVEDNKTDAIEALVKAIGNDSRLEVYSLHTKYPQGAEKQLIAAITGREVPSGALPADAGVVVMNVGTAAQIAESMITGLPLYKRYLTCTGDAIKNPQTIEIRIGVPFQSVIDQCGGFSSEPGKVISGGPMMGVTQFVTDIPVMKGTSGILCLTKESAKIATPSNCIHCGKCVGVCPIHLQPLNIAEYSQRNMWDKCESNNAMDCIECGSCSYICPAKRTLVSSIRVAKREIIAQRRKGN.

4Fe-4S ferredoxin-type domains follow at residues 359–391 (ESAK…IAEY) and 398–428 (DKCE…VSSI). C369, C372, C375, C379, C408, C411, C414, and C418 together coordinate [4Fe-4S] cluster.

Belongs to the 4Fe4S bacterial-type ferredoxin family. RnfC subfamily. The complex is composed of six subunits: RnfA, RnfB, RnfC, RnfD, RnfE and RnfG. The cofactor is [4Fe-4S] cluster.

It is found in the cell membrane. The enzyme catalyses 2 reduced [2Fe-2S]-[ferredoxin] + Na(+)(in) + NAD(+) + H(+) = 2 oxidized [2Fe-2S]-[ferredoxin] + Na(+)(out) + NADH. Part of a membrane-bound complex that couples electron transfer with translocation of ions across the membrane. Couples electron transfer from reduced ferredoxin to NAD(+) with electrogenic movement of Na(+) out of the cell. Involved in caffeate respiration. The chain is Na(+)-translocating ferredoxin:NAD(+) oxidoreductase complex subunit C from Acetobacterium woodii (strain ATCC 29683 / DSM 1030 / JCM 2381 / KCTC 1655 / WB1).